A 297-amino-acid polypeptide reads, in one-letter code: Large ribosomal subunit protein uL18 (297 aa).

Gly2 is subject to N-acetylglycine. Lys5 and Lys48 each carry N6-acetyllysine. Ser185 carries the phosphoserine modification. Lys220 is modified (N6-acetyllysine; alternate). A Glycyl lysine isopeptide (Lys-Gly) (interchain with G-Cter in SUMO1); alternate cross-link involves residue Lys220. Lys220 is covalently cross-linked (Glycyl lysine isopeptide (Lys-Gly) (interchain with G-Cter in SUMO2); alternate). Thr232 bears the Phosphothreonine mark. The interval 253–297 (YEKKPKREVKKKRWNRPKMSLAQKKDRVAQKKASFLRAQERAAES) is disordered. Positions 258–268 (KREVKKKRWNR) are enriched in basic residues. At Ser272 the chain carries Phosphoserine.

This sequence belongs to the universal ribosomal protein uL18 family. Component of the large ribosomal subunit (LSU). Part of the 5S RNP complex, which is a LSU subcomplex composed of the 5S RNA, RPL5 and RPL11. Component of a hexameric 5S RNP precursor complex, composed of 5S RNA, RRS1, RPF2/BXDC1, RPL5, RPL11 and HEATR3; this complex acts as a precursor for ribosome assembly. Interacts with isoform 1 of NVL in an ATP-dependent manner. Interacts with RRP1B. Interacts with IPO5, IPO7 and KPNB1; these interactions may be involved in RPL5 nuclear import for the assembly of ribosomal subunits.

It is found in the cytoplasm. It localises to the nucleus. The protein localises to the nucleolus. In terms of biological role, component of the ribosome, a large ribonucleoprotein complex responsible for the synthesis of proteins in the cell. The small ribosomal subunit (SSU) binds messenger RNAs (mRNAs) and translates the encoded message by selecting cognate aminoacyl-transfer RNA (tRNA) molecules. The large subunit (LSU) contains the ribosomal catalytic site termed the peptidyl transferase center (PTC), which catalyzes the formation of peptide bonds, thereby polymerizing the amino acids delivered by tRNAs into a polypeptide chain. The nascent polypeptides leave the ribosome through a tunnel in the LSU and interact with protein factors that function in enzymatic processing, targeting, and the membrane insertion of nascent chains at the exit of the ribosomal tunnel. As part of the 5S RNP/5S ribonucleoprotein particle it is an essential component of the LSU, required for its formation and the maturation of rRNAs. It also couples ribosome biogenesis to p53/TP53 activation. As part of the 5S RNP it accumulates in the nucleoplasm and inhibits MDM2, when ribosome biogenesis is perturbed, mediating the stabilization and the activation of TP53. The sequence is that of Large ribosomal subunit protein uL18 (RPL5) from Oryctolagus cuniculus (Rabbit).